Reading from the N-terminus, the 110-residue chain is Small ribosomal subunit protein bS18c (110 aa).

This sequence belongs to the bacterial ribosomal protein bS18 family. As to quaternary structure, part of the 30S ribosomal subunit.

It localises to the plastid. It is found in the chloroplast. This is Small ribosomal subunit protein bS18c (rps18) from Pisum sativum (Garden pea).